A 963-amino-acid chain; its full sequence is Importin-13 (963 aa).

HEAT repeat units lie at residues 24–54 (ENVE…QAQA), 56–88 (PQAW…KISR), 95–135 (TDQY…LSMM), 142–179 (AVAD…EFQT), 194–231 (LAVE…SWVQ), 236–268 (LQDC…NAIS), 276–325 (VNTL…ALLD), 330–372 (WQSF…DDIL), 375–438 (EAEK…YEML), 440–476 (AELL…FQSI), 487–522 (VVPG…WLAD), 524–558 (PVMI…CREC), 562–600 (LPPY…LLSA), 603–648 (VEEI…SNLF), 676–716 (PVVV…VKTL), 720–754 (FAPM…VHIF), 761–803 (FPPI…ALKR), 815–845 (VKAV…TELL), 860–893 (EDGR…FALN), and 897–931 (FSLL…QQIL). One can recognise an Importin N-terminal domain in the interval 45–111 (AQKWLMQAQA…KAQLFTQITR (67 aa)).

It belongs to the importin beta family. Interacts with UBC9, RAN, RBM8A, eIF-1A and PAX6.

The protein localises to the cytoplasm. It localises to the nucleus. Functionally, functions in nuclear protein import as nuclear transport receptor. Serves as receptor for nuclear localization signals (NLS) in cargo substrates. Is thought to mediate docking of the importin/substrate complex to the nuclear pore complex (NPC) through binding to nucleoporin and the complex is subsequently translocated through the pore by an energy requiring, Ran-dependent mechanism. At the nucleoplasmic side of the NPC, Ran binds to the importin, the importin/substrate complex dissociates and importin is re-exported from the nucleus to the cytoplasm where GTP hydrolysis releases Ran. The directionality of nuclear import is thought to be conferred by an asymmetric distribution of the GTP- and GDP-bound forms of Ran between the cytoplasm and nucleus. Mediates the nuclear import of UBC9, the RBM8A/MAGOH complex, PAX6 and probably other members of the paired homeobox family. Also mediates nuclear export of eIF-1A, and the cytoplasmic release of eIF-1A is triggered by the loading of import substrates onto IPO13. This chain is Importin-13 (IPO13), found in Bos taurus (Bovine).